The primary structure comprises 310 residues: HPr kinase/phosphorylase (310 aa).

Active-site residues include His136 and Lys157. 151–158 (GDSGIGKS) provides a ligand contact to ATP. Ser158 is a binding site for Mg(2+). Residue Asp175 is the Proton acceptor; for phosphorylation activity. Proton donor; for dephosphorylation activity of the active site. Residues 199 to 208 (LEIRGLGIIN) are important for the catalytic mechanism of both phosphorylation and dephosphorylation. Mg(2+) is bound at residue Glu200. Arg241 is a catalytic residue. The important for the catalytic mechanism of dephosphorylation stretch occupies residues 262-267 (PVRPGR).

Belongs to the HPrK/P family. As to quaternary structure, homohexamer. Mg(2+) serves as cofactor.

The enzyme catalyses [HPr protein]-L-serine + ATP = [HPr protein]-O-phospho-L-serine + ADP + H(+). It carries out the reaction [HPr protein]-O-phospho-L-serine + phosphate + H(+) = [HPr protein]-L-serine + diphosphate. In terms of biological role, catalyzes the ATP- as well as the pyrophosphate-dependent phosphorylation of a specific serine residue in HPr, a phosphocarrier protein of the phosphoenolpyruvate-dependent sugar phosphotransferase system (PTS). HprK/P also catalyzes the pyrophosphate-producing, inorganic phosphate-dependent dephosphorylation (phosphorolysis) of seryl-phosphorylated HPr (P-Ser-HPr). The two antagonistic activities of HprK/P are regulated by several intracellular metabolites, which change their concentration in response to the absence or presence of rapidly metabolisable carbon sources (glucose, fructose, etc.) in the growth medium. Therefore, by controlling the phosphorylation state of HPr, HPrK/P is a sensor enzyme that plays a major role in the regulation of carbon metabolism and sugar transport: it mediates carbon catabolite repression (CCR), and regulates PTS-catalyzed carbohydrate uptake and inducer exclusion. This chain is HPr kinase/phosphorylase, found in Staphylococcus epidermidis (strain ATCC 35984 / DSM 28319 / BCRC 17069 / CCUG 31568 / BM 3577 / RP62A).